The chain runs to 20 residues: 54 kDa cell wall protein (20 aa).

The segment at 1–20 (KVPVDDQFRRVNNGGATDTR) is disordered.

It is found in the secreted. Its subcellular location is the cell wall. The polypeptide is 54 kDa cell wall protein (Arabidopsis thaliana (Mouse-ear cress)).